Consider the following 369-residue polypeptide: Phenylalanine--tRNA ligase alpha subunit (369 aa).

Position 269 (Glu269) interacts with Mg(2+).

Belongs to the class-II aminoacyl-tRNA synthetase family. Phe-tRNA synthetase alpha subunit type 1 subfamily. In terms of assembly, tetramer of two alpha and two beta subunits. Requires Mg(2+) as cofactor.

It localises to the cytoplasm. The enzyme catalyses tRNA(Phe) + L-phenylalanine + ATP = L-phenylalanyl-tRNA(Phe) + AMP + diphosphate + H(+). The sequence is that of Phenylalanine--tRNA ligase alpha subunit from Brucella anthropi (strain ATCC 49188 / DSM 6882 / CCUG 24695 / JCM 21032 / LMG 3331 / NBRC 15819 / NCTC 12168 / Alc 37) (Ochrobactrum anthropi).